A 232-amino-acid chain; its full sequence is LexA repressor (232 aa).

Polar residues predominate over residues 1 to 10 (MDDSNDSSSA). Residues 1 to 22 (MDDSNDSSSAGPDGRLHAVDPS) form a disordered region. Residues 47–67 (IREIGDAVGLTSTSSVAHQLR) constitute a DNA-binding region (H-T-H motif). Residues Ser156 and Lys193 each act as for autocatalytic cleavage activity in the active site.

Belongs to the peptidase S24 family. In terms of assembly, homodimer.

It carries out the reaction Hydrolysis of Ala-|-Gly bond in repressor LexA.. Functionally, represses a number of genes involved in the response to DNA damage (SOS response), including recA and lexA. In the presence of single-stranded DNA, RecA interacts with LexA causing an autocatalytic cleavage which disrupts the DNA-binding part of LexA, leading to derepression of the SOS regulon and eventually DNA repair. In Mycolicibacterium paratuberculosis (strain ATCC BAA-968 / K-10) (Mycobacterium paratuberculosis), this protein is LexA repressor.